A 235-amino-acid polypeptide reads, in one-letter code: 5'-methylthioadenosine/S-adenosylhomocysteine nucleosidase (235 aa).

The Proton acceptor role is filled by Glu-12. Substrate is bound by residues Gly-78, Ile-152, and 173–174; that span reads ME. Residue Asp-197 is the Proton donor of the active site.

It belongs to the PNP/UDP phosphorylase family. MtnN subfamily. In terms of assembly, homodimer.

It catalyses the reaction S-adenosyl-L-homocysteine + H2O = S-(5-deoxy-D-ribos-5-yl)-L-homocysteine + adenine. It carries out the reaction S-methyl-5'-thioadenosine + H2O = 5-(methylsulfanyl)-D-ribose + adenine. The catalysed reaction is 5'-deoxyadenosine + H2O = 5-deoxy-D-ribose + adenine. The protein operates within amino-acid biosynthesis; L-methionine biosynthesis via salvage pathway; S-methyl-5-thio-alpha-D-ribose 1-phosphate from S-methyl-5'-thioadenosine (hydrolase route): step 1/2. In terms of biological role, catalyzes the irreversible cleavage of the glycosidic bond in both 5'-methylthioadenosine (MTA) and S-adenosylhomocysteine (SAH/AdoHcy) to adenine and the corresponding thioribose, 5'-methylthioribose and S-ribosylhomocysteine, respectively. Also cleaves 5'-deoxyadenosine, a toxic by-product of radical S-adenosylmethionine (SAM) enzymes, into 5-deoxyribose and adenine. Thus, is required for in vivo function of the radical SAM enzymes biotin synthase and lipoic acid synthase, that are inhibited by 5'-deoxyadenosine accumulation. The sequence is that of 5'-methylthioadenosine/S-adenosylhomocysteine nucleosidase from Buchnera aphidicola subsp. Schizaphis graminum (strain Sg).